The chain runs to 115 residues: UPF0235 protein CTA_0423 (115 aa).

Belongs to the UPF0235 family.

This chain is UPF0235 protein CTA_0423, found in Chlamydia trachomatis serovar A (strain ATCC VR-571B / DSM 19440 / HAR-13).